The chain runs to 426 residues: Cytochrome c biogenesis protein CcsB (426 aa).

3 helical membrane-spanning segments follow: residues 14-34, 72-92, and 162-182; these read LKIA…GTLI, SFWF…CSFR, and LGPI…TYGS.

The protein belongs to the Ccs1/CcsB family. May interact with CcsA.

The protein resides in the cellular thylakoid membrane. Required during biogenesis of c-type cytochromes (cytochrome c6 and cytochrome f) at the step of heme attachment. This chain is Cytochrome c biogenesis protein CcsB, found in Prochlorococcus marinus (strain NATL2A).